Consider the following 379-residue polypeptide: Cytochrome b (379 aa).

Transmembrane regions (helical) follow at residues 33–53 (FGSL…FLAM), 77–98 (WLIR…FIHV), 113–133 (WNIG…GYVL), and 178–198 (FFAF…VHLL). Residues histidine 83 and histidine 97 each contribute to the heme b site. Histidine 182 and histidine 196 together coordinate heme b. Histidine 201 serves as a coordination point for a ubiquinone. 4 helical membrane-spanning segments follow: residues 226–246 (TKDL…ALFF), 288–308 (LGGV…PLLN), 320–340 (VTQV…WIGG), and 347–367 (FTMI…ILMP).

Belongs to the cytochrome b family. The cytochrome bc1 complex contains 11 subunits: 3 respiratory subunits (MT-CYB, CYC1 and UQCRFS1), 2 core proteins (UQCRC1 and UQCRC2) and 6 low-molecular weight proteins (UQCRH/QCR6, UQCRB/QCR7, UQCRQ/QCR8, UQCR10/QCR9, UQCR11/QCR10 and a cleavage product of UQCRFS1). This cytochrome bc1 complex then forms a dimer. The cofactor is heme b.

Its subcellular location is the mitochondrion inner membrane. In terms of biological role, component of the ubiquinol-cytochrome c reductase complex (complex III or cytochrome b-c1 complex) that is part of the mitochondrial respiratory chain. The b-c1 complex mediates electron transfer from ubiquinol to cytochrome c. Contributes to the generation of a proton gradient across the mitochondrial membrane that is then used for ATP synthesis. The sequence is that of Cytochrome b (MT-CYB) from Akodon fumeus (Smoky grass mouse).